We begin with the raw amino-acid sequence, 1253 residues long: MGHSRRPVGGEKKSRGFGRSKAAADVGDGRQAGKPQVKKAVFESTKKKEIGVSDLTLLSKISNEAINDNLKLRFEHDEIYTYIGHVLVSVNPFRDLGIYTDNVLESYRGKNRLEVPPHVFAVAESAYYNMKSYKDNQCVIISGESGAGKTEAAKRIMQYIASVSGGTDSSIQQIKEMVLATNPLLESFGNAKTLRNNNSSRFGKYLELEFNTNGEPVGANITNYLLEKSRVVGQITNERNFHIFYQFTKAAPQKYRDMFGIQQPQSYLYTSRSKCYDVPGIDDSAEFRDTVNAMNVIGMTESEQDNVFRMLAAILWIGNVQFAEDDSGNAAITDQSVVDFIAYLLEVDAAQVNKAFTIRVMETARGGRRGSIYEVPLNTVQALAVRDALAKAIYFNLFDWIVQRVNSSLAARGEIANSIGILDIYGFEIFEKNSFEQLCINYVNEKLQQIFIQLTLKAEQDEYAREQIQWTPIKYFDNKVVCSLIEDKRPPGVFAALNDACATAHADSGAADNTFVGRLNFLSQNPNFENRQGQFIVKHYAGDVSYAVTGMTDKNKDQLLKDLLNLVGSSGNQFVHTLFPEQVNQDDKRRPPTASDKIKASANDLVATLMKAQPSYIRTIKPNDNKAPREYNVGNVLHQIKYLGLQENVRIRRAGFAYRQTFDKFVERFYLLSPKTSYAGDYTWTGSAESGARQILKDTSIPAEEYQMGITKVFVKTPETLFALEAMRDRYWHNMAIRIQRAWRNYLRYRIECATRIQRFWRRTTGGLEFIKLRDQGHQLLNGRKERRRMSLLGSRRFLGDYIGVGNKGGPGEMVRNGAGISGSEDILFSCRGEVLVSKFGRSSKPAPRILVLTNRHIYIIAQNILNNQLVISSERTIPIGAIKAISASNLKDDWFSIVVGSAQEPDPLLSCVFKTELFTHLNNALRGQLNLKIADHIEYSKKPGKMATVKVVKDPAVTGDDTYKSSTIHTGAGEPASSVSKPTPRPKPVSARPVTKGKLLRPGGPGGGPSKLASRPTPAAQPLPRATPQPAAAQPAAPQPAARVVPQPVAAVAASHARTGSTASVRAPPPPPPAAAPAPKKPTAKALYDFNSQQPNELSIKAGEIVQIVSKEGNGWWLCMNMATSSQGWTPEAYLEEQVAPAPKPTPPPPPPAAPRSTPTPVNGAAAAAKAKPAPPAPPAKRPNMAGRKAVPAPPPAPRDSAVSMNSHDSSGGSGRGTPNSASNASLAGGLAEALRARQHAMQGKNDDDDDW.

Residues 1 to 40 (MGHSRRPVGGEKKSRGFGRSKAAADVGDGRQAGKPQVKKA) form a disordered region. Positions 50–729 (IGVSDLTLLS…TLFALEAMRD (680 aa)) constitute a Myosin motor domain. 143–150 (GESGAGKT) contributes to the ATP binding site. Serine 371 carries the post-translational modification Phosphoserine. The interval 418 to 500 (SIGILDIYGF…PGVFAALNDA (83 aa)) is actin-binding. IQ domains are found at residues 733–753 (HNMA…RIEC) and 754–779 (ATRI…QGHQ). One can recognise a TH1 domain in the interval 787–977 (RRRMSLLGSR…TIHTGAGEPA (191 aa)). 2 disordered regions span residues 959–1083 (TGDD…PKKP) and 1139–1253 (QVAP…DDDW). Low complexity predominate over residues 1029-1055 (PQPAAAQPAAPQPAARVVPQPVAAVAA). Composition is skewed to pro residues over residues 1068-1081 (APPP…PAPK) and 1143-1155 (APKP…PPAA). Residues 1080–1141 (PKKPTAKALY…PEAYLEEQVA (62 aa)) enclose the SH3 domain. 2 stretches are compositionally biased toward low complexity: residues 1156 to 1173 (PRST…AKAK) and 1221 to 1235 (NSAS…LAEA).

It belongs to the TRAFAC class myosin-kinesin ATPase superfamily. Myosin family. In terms of processing, phosphorylation of the TEDS site (Ser-371) is required for the polarization of the actin cytoskeleton. Phosphorylation probably activates the myosin-I ATPase activity.

Its subcellular location is the cytoplasm. It localises to the cytoskeleton. The protein localises to the actin patch. In terms of biological role, type-I myosin implicated in the organization of the actin cytoskeleton. Required for proper actin cytoskeleton polarization. At the cell cortex, assembles in patch-like structures together with proteins from the actin-polymerizing machinery and promotes actin assembly. Functions as actin nucleation-promoting factor (NPF) for the Arp2/3 complex. Plays an important role in polarized growth, spore germination, hyphal morphogenesis, and septal wall formation. The polypeptide is Myosin-1 (myoA) (Aspergillus clavatus (strain ATCC 1007 / CBS 513.65 / DSM 816 / NCTC 3887 / NRRL 1 / QM 1276 / 107)).